We begin with the raw amino-acid sequence, 789 residues long: Homocitrate dehydratase, mitochondrial (789 aa).

The transit peptide at 1–14 directs the protein to the mitochondrion; it reads MLSSANRFYIKRHL. Residues Q96 and 189 to 191 contribute to the substrate site; that span reads DSH. [4Fe-4S] cluster-binding residues include C385, C448, and C451. Substrate is bound by residues R476, R481, K610, and 672-673; that span reads AR.

Belongs to the aconitase/IPM isomerase family. [4Fe-4S] cluster serves as cofactor.

Its subcellular location is the mitochondrion. It catalyses the reaction (2R)-homocitrate = cis-homoaconitate + H2O. The protein operates within amino-acid biosynthesis; L-lysine biosynthesis via AAA pathway; L-alpha-aminoadipate from 2-oxoglutarate: step 2/5. Its function is as follows. Catalyzes the reversible dehydration of (R)-homocitrate to cis-homoaconitate, a step in the alpha-aminoadipate pathway for lysine biosynthesis. The chain is Homocitrate dehydratase, mitochondrial (ACO2) from Saccharomyces cerevisiae (strain ATCC 204508 / S288c) (Baker's yeast).